A 328-amino-acid chain; its full sequence is 5,10-methylenetetrahydromethanopterin reductase (328 aa).

The protein belongs to the mer family.

It is found in the cytoplasm. It catalyses the reaction 5-methyl-5,6,7,8-tetrahydromethanopterin + oxidized coenzyme F420-(gamma-L-Glu)(n) + H(+) = 5,10-methylenetetrahydromethanopterin + reduced coenzyme F420-(gamma-L-Glu)(n). Its pathway is one-carbon metabolism; methanogenesis from CO(2); methyl-coenzyme M from 5,10-methylene-5,6,7,8-tetrahydromethanopterin: step 1/2. Its function is as follows. Catalyzes the reversible reduction of methylene-H(4)MPT to methyl-H(4)MPT. This chain is 5,10-methylenetetrahydromethanopterin reductase, found in Methanosarcina barkeri (strain Fusaro / DSM 804).